The following is a 1515-amino-acid chain: Lysophospholipase nte1 (1515 aa).

Residues 1 to 59 (MESLSNLGNAMSSVLSETTSTTATAILADPTEALSSVVALASDAVSKATSDVVPEHTPT) are Cytoplasmic-facing. A helical membrane pass occupies residues 60-80 (SWFTIILWLLHRISSVLYFVI). Residues 81-102 (KLTTITTPTFLFNIFSTSLTVT) are Lumenal-facing. Residues 103–123 (MNATTLVLIMLFMMAGVTWVV) form a helical membrane-spanning segment. At 124–1515 (RYRYLNMYSR…RTMAPRRASI (1392 aa)) the chain is on the cytoplasmic side. 3 disordered regions span residues 278 to 303 (MHDTDDDDSPDPTPSAPGTAMPGYPM), 519 to 580 (VTAT…TPRN), and 617 to 639 (VNPDSTQASPRFVPTDQRRSRGG). 2 stretches are compositionally biased toward polar residues: residues 543–554 (LTNTQQLKSGPA) and 566–579 (PRPQRNLSPFSTPR). A nucleoside 3',5'-cyclic phosphate contacts are provided by residues 670-789 (SPVP…LAGY) and 835-955 (RLTE…IAAR). Residues 1212–1376 (LVLGGGGARG…IDNLTVSRMK (165 aa)) form the PNPLA domain. The short motif at 1216–1221 (GGGARG) is the GXGXXG element. The short motif at 1243–1247 (GTSIG) is the GXSXG element. Serine 1245 serves as the catalytic Nucleophile. The active-site Proton acceptor is aspartate 1363. A DGA/G motif is present at residues 1363–1365 (DGG).

The protein belongs to the NTE family.

It is found in the endoplasmic reticulum membrane. The catalysed reaction is a 1-acyl-sn-glycero-3-phosphocholine + H2O = sn-glycerol 3-phosphocholine + a fatty acid + H(+). Inhibited by organophosphorus esters. Intracellular phospholipase B that catalyzes the double deacylation of phosphatidylcholine (PC) to glycerophosphocholine (GroPCho). Plays an important role in membrane lipid homeostasis. Responsible for the rapid PC turnover in response to inositol, elevated temperatures, or when choline is present in the growth medium. This is Lysophospholipase nte1 (nte1) from Neurospora crassa (strain ATCC 24698 / 74-OR23-1A / CBS 708.71 / DSM 1257 / FGSC 987).